Reading from the N-terminus, the 824-residue chain is uncharacterized protein (824 aa).

This is an uncharacterized protein from Caenorhabditis elegans.